A 189-amino-acid chain; its full sequence is Chitin synthase 2 (189 aa).

It belongs to the chitin synthase family. Class II subfamily.

Its subcellular location is the cell membrane. The catalysed reaction is [(1-&gt;4)-N-acetyl-beta-D-glucosaminyl](n) + UDP-N-acetyl-alpha-D-glucosamine = [(1-&gt;4)-N-acetyl-beta-D-glucosaminyl](n+1) + UDP + H(+). Its function is as follows. Polymerizes chitin, a structural polymer of the cell wall and septum, by transferring the sugar moiety of UDP-GlcNAc to the non-reducing end of the growing chitin polymer. This is Chitin synthase 2 (CHS2) from Ajellomyces dermatitidis (Blastomyces dermatitidis).